Reading from the N-terminus, the 151-residue chain is UPF0208 membrane protein YfbV (151 aa).

At 1-45 (MSTPDNRSVNFFSLFRRGQHYAKTWPMEKRLAPVFVENRVIRMTR) the chain is on the cytoplasmic side. The helical transmembrane segment at 46 to 65 (YAIRFMPPVAVFTLCWQIAL) threads the bilayer. Residues 66–68 (GGQ) are Periplasmic-facing. Residues 69-91 (LGPAVATALFALSLPMQGLWWLG) traverse the membrane as a helical segment. Topologically, residues 92 to 151 (KRSLTPLPPSILNWFYEVRGKLQEAGQALAPVEGKPDYQALADTLKRAFKQLDKTFLDDL) are cytoplasmic.

The protein belongs to the UPF0208 family.

It is found in the cell inner membrane. The polypeptide is UPF0208 membrane protein YfbV (yfbV) (Salmonella typhi).